The primary structure comprises 273 residues: 2,3,4,5-tetrahydropyridine-2,6-dicarboxylate N-succinyltransferase (273 aa).

Residues arginine 105 and aspartate 142 each coordinate substrate.

This sequence belongs to the transferase hexapeptide repeat family. As to quaternary structure, homotrimer.

The protein localises to the cytoplasm. It carries out the reaction (S)-2,3,4,5-tetrahydrodipicolinate + succinyl-CoA + H2O = (S)-2-succinylamino-6-oxoheptanedioate + CoA. The protein operates within amino-acid biosynthesis; L-lysine biosynthesis via DAP pathway; LL-2,6-diaminopimelate from (S)-tetrahydrodipicolinate (succinylase route): step 1/3. This is 2,3,4,5-tetrahydropyridine-2,6-dicarboxylate N-succinyltransferase from Bordetella avium (strain 197N).